Reading from the N-terminus, the 113-residue chain is Large ribosomal subunit protein uL22 (113 aa).

Belongs to the universal ribosomal protein uL22 family. Part of the 50S ribosomal subunit.

Functionally, this protein binds specifically to 23S rRNA; its binding is stimulated by other ribosomal proteins, e.g. L4, L17, and L20. It is important during the early stages of 50S assembly. It makes multiple contacts with different domains of the 23S rRNA in the assembled 50S subunit and ribosome. In terms of biological role, the globular domain of the protein is located near the polypeptide exit tunnel on the outside of the subunit, while an extended beta-hairpin is found that lines the wall of the exit tunnel in the center of the 70S ribosome. The sequence is that of Large ribosomal subunit protein uL22 from Roseiflexus sp. (strain RS-1).